A 600-amino-acid polypeptide reads, in one-letter code: Elongation factor 4 (600 aa).

Positions 5 to 187 (KYIRNFSIIA…AIVNKLPPPK (183 aa)) constitute a tr-type G domain. GTP is bound by residues 17 to 22 (DHGKST) and 134 to 137 (NKLD).

This sequence belongs to the TRAFAC class translation factor GTPase superfamily. Classic translation factor GTPase family. LepA subfamily.

It is found in the cell inner membrane. The catalysed reaction is GTP + H2O = GDP + phosphate + H(+). Required for accurate and efficient protein synthesis under certain stress conditions. May act as a fidelity factor of the translation reaction, by catalyzing a one-codon backward translocation of tRNAs on improperly translocated ribosomes. Back-translocation proceeds from a post-translocation (POST) complex to a pre-translocation (PRE) complex, thus giving elongation factor G a second chance to translocate the tRNAs correctly. Binds to ribosomes in a GTP-dependent manner. The polypeptide is Elongation factor 4 (Rickettsia africae (strain ESF-5)).